A 338-amino-acid polypeptide reads, in one-letter code: Secretory carrier-associated membrane protein 1 (338 aa).

A disordered region spans residues 1–64; sequence MSDFDSNPFA…NVPNTQPAIM (64 aa). An N-acetylserine modification is found at Ser2. Phosphoserine is present on Ser2. The Cytoplasmic portion of the chain corresponds to 2–155; it reads SDFDSNPFAD…QKTVKLMYYL (154 aa). Position 45 is a phosphothreonine (Thr45). Residues 156-176 traverse the membrane as a helical segment; that stretch reads WMFHAVTLFLNIFGCLAWFCV. Residues 177–181 lie on the Lumenal side of the membrane; sequence DSSRA. Residues 182–202 traverse the membrane as a helical segment; the sequence is VDFGLSILWFLLFTPCSFVCW. The Cytoplasmic segment spans residues 203 to 218; that stretch reads YRPLYGAFRSDSSFRF. Residues 219–239 traverse the membrane as a helical segment; sequence FVFFFVYICQFAVHVLQAAGF. Over 240–261 the chain is Lumenal; sequence HNWGNCGWISSLTGLNKNIPVG. Residues 262–282 form a helical membrane-spanning segment; sequence IMMIIIAALFTASAVISLVMF. Over 283 to 338 the chain is Cytoplasmic; sequence KKVHGLYRTTGASFEKAQQEFATGVMSNKTVQTAAANAASTAATSAAQNAFKGNQM.

This sequence belongs to the SCAMP family. As to quaternary structure, interacts with SYNRG, ITSN1 and SLC9A7.

The protein localises to the golgi apparatus. The protein resides in the trans-Golgi network membrane. It localises to the recycling endosome membrane. Functions in post-Golgi recycling pathways. Acts as a recycling carrier to the cell surface. The polypeptide is Secretory carrier-associated membrane protein 1 (Scamp1) (Mus musculus (Mouse)).